The sequence spans 398 residues: Cathepsin D (398 aa).

The N-terminal stretch at 1 to 20 (MAPRGLLVLLLLALVGPCAA) is a signal peptide. A propeptide spans 21–63 (LIRIPLTKFTSTRRMLTEVGSEIPDMNAITQFLKFKLGFADLA) (activation peptide). Residues 78-395 (YYGEIGIGTP…DRDNDSVGFA (318 aa)) form the Peptidase A1 domain. Residue Asp-96 is part of the active site. A disulfide bridge connects residues Cys-109 and Cys-116. Residues Asn-133 and Asn-251 are each glycosylated (N-linked (GlcNAc...) asparagine). Cys-274 and Cys-278 are disulfide-bonded. The active site involves Asp-283. A disulfide bridge links Cys-317 with Cys-354.

The protein belongs to the peptidase A1 family. In terms of assembly, consists of a light chain and a heavy chain. Oocytic yolk, preovulatory follicles, liver.

It is found in the lysosome. The enzyme catalyses Specificity similar to, but narrower than, that of pepsin A. Does not cleave the 4-Gln-|-His-5 bond in B chain of insulin.. In terms of biological role, acid protease active in intracellular protein breakdown. In chicken it is a key enzyme for yolk formation as it is capable of catalyzing intra oocytic break down of protein components of both vitellogenin and VLDL. This Gallus gallus (Chicken) protein is Cathepsin D (CTSD).